The sequence spans 367 residues: Epoxide hydrolase 3 (367 aa).

The chain crosses the membrane as a helical span at residues 21–41; the sequence is GVFFWVLVYVAALLAAVSYIP. The active-site Nucleophile is the Asp-173. Tyr-285 serves as the catalytic Proton donor. His-340 (proton acceptor) is an active-site residue.

The protein belongs to the AB hydrolase superfamily. Epoxide hydrolase family.

It is found in the microsome membrane. The catalysed reaction is an epoxide + H2O = an ethanediol. The enzyme catalyses 9,10-epoxyoctadecanoate + H2O = 9,10-dihydroxyoctadecanoate. It catalyses the reaction 9,10-epoxy-(12Z)-octadecenoate + H2O = 9,10-dihydroxy-(12Z)-octadecenoate. It carries out the reaction 8,9-epoxy-(5Z,11Z,14Z)-eicosatrienoate + H2O = 8,9-dihydroxy-(5Z,11Z,14Z)-eicosatrienoate. The catalysed reaction is 11,12-epoxy-(5Z,8Z,14Z)-eicosatrienoate + H2O = 11,12-dihydroxy-(5Z,8Z,14Z)-eicosatrienoate. The enzyme catalyses 14,15-epoxy-(5Z,8Z,11Z)-eicosatrienoate + H2O = 14,15-dihydroxy-(5Z,8Z,11Z)-eicosatrienoate. With respect to regulation, inhibited by 1-(1-acetylpiperidin-4-yl)-3-(4-(trifl uoromethoxy)phenyl)urea (TPAU), 1-cyclohexyl-3-dodecylurea (CDU), 12-(3-adamantan-1-yl-ureido)-dodecanoic acid (AUDA), 1-((3S, 5S, 7S)-adamantan-1-yl)-3-(5-(2-(2-ethoxyethoxy) ethoxy)pentyl)urea (AEPU) and to a lesser extent by 8-(3-((3S, 5S, 7S)-adamantan-1-yl)ureido) octanoic acid (AUOA). Catalyzes the hydrolysis of epoxide-containing fatty acids. Active in vitro against epoxyeicosatrienoic acids (EETs) including 8,9-EET, 9,10-EET, 11,12-EET and 14,15-EET and leukotoxin. This chain is Epoxide hydrolase 3 (ephx3), found in Xenopus tropicalis (Western clawed frog).